The primary structure comprises 217 residues: Imidazole glycerol phosphate synthase subunit HisH (217 aa).

Residues 3–217 enclose the Glutamine amidotransferase type-1 domain; sequence SVAVIDYGMG…FLRWEPWSSR (215 aa). Catalysis depends on C82, which acts as the Nucleophile. Residues H193 and E195 contribute to the active site.

Heterodimer of HisH and HisF.

It is found in the cytoplasm. The enzyme catalyses 5-[(5-phospho-1-deoxy-D-ribulos-1-ylimino)methylamino]-1-(5-phospho-beta-D-ribosyl)imidazole-4-carboxamide + L-glutamine = D-erythro-1-(imidazol-4-yl)glycerol 3-phosphate + 5-amino-1-(5-phospho-beta-D-ribosyl)imidazole-4-carboxamide + L-glutamate + H(+). It carries out the reaction L-glutamine + H2O = L-glutamate + NH4(+). Its pathway is amino-acid biosynthesis; L-histidine biosynthesis; L-histidine from 5-phospho-alpha-D-ribose 1-diphosphate: step 5/9. Functionally, IGPS catalyzes the conversion of PRFAR and glutamine to IGP, AICAR and glutamate. The HisH subunit catalyzes the hydrolysis of glutamine to glutamate and ammonia as part of the synthesis of IGP and AICAR. The resulting ammonia molecule is channeled to the active site of HisF. This is Imidazole glycerol phosphate synthase subunit HisH from Methylococcus capsulatus (strain ATCC 33009 / NCIMB 11132 / Bath).